A 390-amino-acid chain; its full sequence is Curcumin synthase 3 (390 aa).

Cys-164 is a catalytic residue.

Belongs to the thiolase-like superfamily. Chalcone/stilbene synthases family. As to quaternary structure, homodimer.

It carries out the reaction (E)-feruloylacetyl-CoA + (E)-feruloyl-CoA + H2O = curcumin + CO2 + 2 CoA. It catalyses the reaction (E)-feruloylacetyl-CoA + (E)-4-coumaroyl-CoA + H2O = demethoxycurcumin + CO2 + 2 CoA. The enzyme catalyses (4-coumaroyl)acetyl-CoA + 4-coumaroyl-CoA + H2O = bisdemethoxycurcumin + CO2 + 2 CoA. It participates in secondary metabolite biosynthesis; flavonoid biosynthesis. Its function is as follows. Catalyzes the synthesis of curcumin by condensing feruloyl-CoA with a diketide-CoA in the curcuminoid biosynthesis. Also acts as a demethoxycurcumin synthase by accepting 4-coumaroyl-CoA as a starter substrate instead of feruloyl-CoA. In Curcuma longa (Turmeric), this protein is Curcumin synthase 3 (CURS3).